Reading from the N-terminus, the 786-residue chain is Protein translocase subunit SecA 1 (786 aa).

ATP contacts are provided by residues Gln85, 103 to 107 (GEGKT), and Asp491.

Belongs to the SecA family. As to quaternary structure, monomer and homodimer. Part of the essential Sec protein translocation apparatus which comprises SecA, SecYEG and auxiliary proteins SecDF. Other proteins may also be involved.

Its subcellular location is the cell membrane. It localises to the cytoplasm. It carries out the reaction ATP + H2O + cellular proteinSide 1 = ADP + phosphate + cellular proteinSide 2.. Its function is as follows. Part of the Sec protein translocase complex. Interacts with the SecYEG preprotein conducting channel. Has a central role in coupling the hydrolysis of ATP to the transfer of proteins into and across the cell membrane, serving as an ATP-driven molecular motor driving the stepwise translocation of polypeptide chains across the membrane. This chain is Protein translocase subunit SecA 1, found in Pediococcus pentosaceus (strain ATCC 25745 / CCUG 21536 / LMG 10740 / 183-1w).